Reading from the N-terminus, the 253-residue chain is Triosephosphate isomerase, cytosolic (253 aa).

Substrate-binding residues include Asn10 and Lys12. The Electrophile role is filled by His96. Catalysis depends on Glu166, which acts as the Proton acceptor.

The protein belongs to the triosephosphate isomerase family. As to quaternary structure, homodimer. Starchy endosperm.

It is found in the cytoplasm. It carries out the reaction D-glyceraldehyde 3-phosphate = dihydroxyacetone phosphate. It participates in carbohydrate biosynthesis; gluconeogenesis. The protein operates within carbohydrate degradation; glycolysis; D-glyceraldehyde 3-phosphate from glycerone phosphate: step 1/1. In Hordeum vulgare (Barley), this protein is Triosephosphate isomerase, cytosolic.